A 378-amino-acid polypeptide reads, in one-letter code: Chaperone protein DnaJ (378 aa).

Residues 5–72 form the J domain; that stretch reads DFYEVLGVPK…QKRAAYDQFG (68 aa). A CR-type zinc finger spans residues 138-216; it reads GKEAQIRIPS…CHGQGKVKKQ (79 aa). The Zn(2+) site is built by Cys-151, Cys-154, Cys-168, Cys-171, Cys-190, Cys-193, Cys-204, and Cys-207. CXXCXGXG motif repeat units follow at residues 151–158, 168–175, 190–197, and 204–211; these read CETCHGSG, CTTCSGTG, CPHCRGTG, and CVTCHGQG. The disordered stretch occupies residues 354–378; the sequence is SLKKGGGKHSPSGESWTDRLKNLFT. The span at 369-378 shows a compositional bias: basic and acidic residues; the sequence is WTDRLKNLFT.

This sequence belongs to the DnaJ family. Homodimer. Zn(2+) serves as cofactor.

Its subcellular location is the cytoplasm. In terms of biological role, participates actively in the response to hyperosmotic and heat shock by preventing the aggregation of stress-denatured proteins and by disaggregating proteins, also in an autonomous, DnaK-independent fashion. Unfolded proteins bind initially to DnaJ; upon interaction with the DnaJ-bound protein, DnaK hydrolyzes its bound ATP, resulting in the formation of a stable complex. GrpE releases ADP from DnaK; ATP binding to DnaK triggers the release of the substrate protein, thus completing the reaction cycle. Several rounds of ATP-dependent interactions between DnaJ, DnaK and GrpE are required for fully efficient folding. Also involved, together with DnaK and GrpE, in the DNA replication of plasmids through activation of initiation proteins. This chain is Chaperone protein DnaJ, found in Paracidovorax citrulli (strain AAC00-1) (Acidovorax citrulli).